The following is a 382-amino-acid chain: Homoserine O-acetyltransferase (382 aa).

A disordered region spans residues 1 to 20 (MSTDQSPCPSATGAELLPPP). In terms of domain architecture, AB hydrolase-1 spans 59 to 363 (NVVLVEHALT…RDGHDGFLTE (305 aa)). S164 serves as the catalytic Nucleophile. Position 234 (R234) interacts with substrate. Catalysis depends on residues D327 and H357. D358 contributes to the substrate binding site.

This sequence belongs to the AB hydrolase superfamily. MetX family. In terms of assembly, homodimer.

It localises to the cytoplasm. It catalyses the reaction L-homoserine + acetyl-CoA = O-acetyl-L-homoserine + CoA. The protein operates within amino-acid biosynthesis; L-methionine biosynthesis via de novo pathway; O-acetyl-L-homoserine from L-homoserine: step 1/1. In terms of biological role, transfers an acetyl group from acetyl-CoA to L-homoserine, forming acetyl-L-homoserine. This Nocardia farcinica (strain IFM 10152) protein is Homoserine O-acetyltransferase.